We begin with the raw amino-acid sequence, 340 residues long: Methionyl-tRNA formyltransferase (340 aa).

110–113 (SLLP) contributes to the (6S)-5,6,7,8-tetrahydrofolate binding site.

Belongs to the Fmt family.

It carries out the reaction L-methionyl-tRNA(fMet) + (6R)-10-formyltetrahydrofolate = N-formyl-L-methionyl-tRNA(fMet) + (6S)-5,6,7,8-tetrahydrofolate + H(+). In terms of biological role, attaches a formyl group to the free amino group of methionyl-tRNA(fMet). The formyl group appears to play a dual role in the initiator identity of N-formylmethionyl-tRNA by promoting its recognition by IF2 and preventing the misappropriation of this tRNA by the elongation apparatus. The protein is Methionyl-tRNA formyltransferase of Synechococcus sp. (strain WH7803).